We begin with the raw amino-acid sequence, 688 residues long: Glycine--tRNA ligase beta subunit (688 aa).

It belongs to the class-II aminoacyl-tRNA synthetase family. Tetramer of two alpha and two beta subunits.

Its subcellular location is the cytoplasm. The enzyme catalyses tRNA(Gly) + glycine + ATP = glycyl-tRNA(Gly) + AMP + diphosphate. This is Glycine--tRNA ligase beta subunit from Histophilus somni (strain 129Pt) (Haemophilus somnus).